The sequence spans 320 residues: G-protein coupled receptor homolog FPV021 (320 aa).

Topologically, residues 1-18 (MDTDYGTVHTQQSVKGNT) are extracellular. The chain crosses the membrane as a helical span at residues 19 to 39 (LILLIYFISFIVGFPGNCTVI). The Cytoplasmic segment spans residues 40 to 52 (WFTGYRWKKSVTT). The helical transmembrane segment at 53 to 73 (IWFLNLAIADTLFVIFIPFEI) threads the bilayer. Residues 74–91 (TYILMGHYWPFGLFVCRI) are Extracellular-facing. A disulfide bond links Cys-89 and Cys-167. Residues 92-112 (GSLMFNTGMYASIFFLTFISI) traverse the membrane as a helical segment. Topologically, residues 113 to 133 (DRYCLAFRRDICNKYRYRINI) are cytoplasmic. A helical transmembrane segment spans residues 134 to 154 (MVMIIISWIISILLSTPYMYF). Residues 155 to 188 (KNTNEKYRNNRDCLEDYHSDNNTYLLRRVVFCIS) are Extracellular-facing. Residue Asn-175 is glycosylated (N-linked (GlcNAc...) asparagine; by host). Residues 189–209 (LVMRYLVPSVVMLFCYCLLLF) traverse the membrane as a helical segment. The Cytoplasmic segment spans residues 210-222 (KHSLFLSKGQTYT). A helical membrane pass occupies residues 223-243 (IVIMITSFMVLWTPYNILYFI). At 244 to 260 (DVIGSHYYNADTIIDAA) the chain is on the extracellular side. Residues 261 to 281 (PISISLIFLSSSINPMIYMLV) form a helical membrane-spanning segment. Topologically, residues 282 to 320 (GRYVSFENYSMRESLKLILSEERDNQTNHENEIKMENIN) are cytoplasmic.

It belongs to the G-protein coupled receptor 1 family.

The protein localises to the host cell membrane. The chain is G-protein coupled receptor homolog FPV021 from Vertebrata (FPV).